The chain runs to 203 residues: A-type ATP synthase subunit E (203 aa).

The protein belongs to the V-ATPase E subunit family. Has multiple subunits with at least A(3), B(3), C, D, E, F, H, I and proteolipid K(x).

The protein localises to the cell membrane. Functionally, component of the A-type ATP synthase that produces ATP from ADP in the presence of a proton gradient across the membrane. This Methanococcus vannielii (strain ATCC 35089 / DSM 1224 / JCM 13029 / OCM 148 / SB) protein is A-type ATP synthase subunit E.